The sequence spans 151 residues: Deoxyuridine 5'-triphosphate nucleotidohydrolase (151 aa).

Residues 70–72 (RSG), asparagine 83, and 87–89 (LID) contribute to the substrate site.

Belongs to the dUTPase family. Mg(2+) is required as a cofactor.

The enzyme catalyses dUTP + H2O = dUMP + diphosphate + H(+). It participates in pyrimidine metabolism; dUMP biosynthesis; dUMP from dCTP (dUTP route): step 2/2. In terms of biological role, this enzyme is involved in nucleotide metabolism: it produces dUMP, the immediate precursor of thymidine nucleotides and it decreases the intracellular concentration of dUTP so that uracil cannot be incorporated into DNA. This chain is Deoxyuridine 5'-triphosphate nucleotidohydrolase, found in Methylococcus capsulatus (strain ATCC 33009 / NCIMB 11132 / Bath).